Here is a 464-residue protein sequence, read N- to C-terminus: Kynureninase (464 aa).

N-acetylmethionine is present on Met-1. Residues Leu-137, Thr-138, 165 to 168 (FPSD), Ser-221, Asp-250, His-253, and Tyr-275 contribute to the pyridoxal 5'-phosphate site. Residue Lys-276 is modified to N6-(pyridoxal phosphate)lysine. Residues Trp-305 and Asn-333 each contribute to the pyridoxal 5'-phosphate site.

The protein belongs to the kynureninase family. In terms of assembly, homodimer. Requires pyridoxal 5'-phosphate as cofactor. High levels in liver and kidney. Also detected in heart, retina, ovary. Lung, testis and brain.

The protein localises to the cytoplasm. It is found in the cytosol. The catalysed reaction is L-kynurenine + H2O = anthranilate + L-alanine + H(+). It carries out the reaction 3-hydroxy-L-kynurenine + H2O = 3-hydroxyanthranilate + L-alanine + H(+). Its pathway is amino-acid degradation; L-kynurenine degradation; L-alanine and anthranilate from L-kynurenine: step 1/1. It participates in cofactor biosynthesis; NAD(+) biosynthesis; quinolinate from L-kynurenine: step 2/3. Inhibited by o-methylbenzoylalanine (OMBA). In terms of biological role, catalyzes the cleavage of L-kynurenine (L-Kyn) and L-3-hydroxykynurenine (L-3OHKyn) into anthranilic acid (AA) and 3-hydroxyanthranilic acid (3-OHAA), respectively. Has a preference for the L-3-hydroxy form. Also has cysteine-conjugate-beta-lyase activity. The chain is Kynureninase (Kynu) from Rattus norvegicus (Rat).